The chain runs to 319 residues: BTB/POZ domain-containing adapter for CUL3-mediated RhoA degradation protein 2 (319 aa).

Positions lysine 31–lysine 99 constitute a BTB domain.

Belongs to the BACURD family. As to quaternary structure, component of the BCR(TNFAIP1) E3 ubiquitin ligase complex, at least composed of cul3, tnfaip1/bacurd2 and rbx1.

It localises to the cytoplasm. The protein localises to the nucleus. The protein resides in the endosome. It functions in the pathway protein modification; protein ubiquitination. Functionally, substrate-specific adapter of a BCR (BTB-CUL3-RBX1) E3 ubiquitin-protein ligase complex involved in regulation of cytoskeleton structure. The BCR(TNFAIP1) E3 ubiquitin ligase complex mediates the ubiquitination of target proteins, leading to their degradation by the proteasome. This chain is BTB/POZ domain-containing adapter for CUL3-mediated RhoA degradation protein 2 (tnfaip1), found in Xenopus laevis (African clawed frog).